The chain runs to 217 residues: Casparian strip membrane protein 6 (217 aa).

Over 1 to 57 the chain is Cytoplasmic; the sequence is MEEAKHIEAVEAKQIEAEEAQRIKAGEAKQIEAGETSRSSRKVITFEPKLVINKGIS. The helical transmembrane segment at 58-78 threads the bilayer; sequence VLGFVLRLFAVFGTIGSALAM. Over 79-103 the chain is Extracellular; it reads GTTHESVVSLSQLVLLKVKYSDLPT. The chain crosses the membrane as a helical span at residues 104–124; that stretch reads LMFFVVANAIAGGYLVLSLPV. Over 125 to 138 the chain is Cytoplasmic; the sequence is SIFHIFSTKAKTSR. A helical membrane pass occupies residues 139–159; sequence IILLVIDTVMLALVSSGASAA. At 160–191 the chain is on the extracellular side; sequence TATVYLAHEGNTTANWPPICQQFDGFCERISG. N170 carries an N-linked (GlcNAc...) asparagine glycan. The helical transmembrane segment at 192 to 212 threads the bilayer; the sequence is SLIGSFCAVILLMLIVINSAI. Residues 213-217 lie on the Cytoplasmic side of the membrane; sequence SLSRH.

Belongs to the Casparian strip membrane proteins (CASP) family. In terms of assembly, homodimer and heterodimers.

It is found in the cell membrane. In terms of biological role, regulates membrane-cell wall junctions and localized cell wall deposition. Required for establishment of the Casparian strip membrane domain (CSD) and the subsequent formation of Casparian strips, a cell wall modification of the root endodermis that determines an apoplastic barrier between the intraorganismal apoplasm and the extraorganismal apoplasm and prevents lateral diffusion. In Arabidopsis lyrata subsp. lyrata (Lyre-leaved rock-cress), this protein is Casparian strip membrane protein 6.